The following is a 128-amino-acid chain: Large ribosomal subunit protein eL22 (128 aa).

Phosphothreonine is present on Thr62. Ser66 is modified (phosphoserine). Lys69 bears the N6-succinyllysine mark.

The protein belongs to the eukaryotic ribosomal protein eL22 family. In terms of assembly, component of the large ribosomal subunit.

The protein localises to the cytoplasm. In terms of biological role, component of the large ribosomal subunit. The ribosome is a large ribonucleoprotein complex responsible for the synthesis of proteins in the cell. The protein is Large ribosomal subunit protein eL22 (RPL22) of Oryctolagus cuniculus (Rabbit).